A 354-amino-acid chain; its full sequence is Coiled-coil domain-containing protein 86 (354 aa).

Positions 1–354 (MDTPLRRSRR…QPPQRPATKV (354 aa)) are disordered. Phosphoserine occurs at positions 18 and 24. Over residues 31–44 (VLVEFESNPKETGE) the composition is skewed to basic and acidic residues. Phosphoserine occurs at positions 47 and 53. The span at 49–58 (PGLGSPSRQP) shows a compositional bias: low complexity. T60 bears the Phosphothreonine mark. S61, S64, S75, S86, S105, S108, S123, and S183 each carry phosphoserine. Positions 97–107 (FPQNQPESSPE) are enriched in polar residues. Positions 199–211 (PAREGPAPKKREG) are enriched in basic and acidic residues. Phosphoserine is present on residues S212 and S213. Residues 232–248 (GKPKSGRVWKDRSKKRF) show a composition bias toward basic residues. Composition is skewed to basic and acidic residues over residues 267–289 (DRQE…ERRR) and 297–311 (AENL…RKAE). Residues 274 to 317 (AKDFARHLEEEKERRRQEKKKRRAENLRRRLENERKAEIVQVIR) are a coiled coil. The segment covering 320-330 (AKLKRAKKKQL) has biased composition (basic residues). R336 carries the citrulline modification.

Post-translationally, citrullinated by PADI4.

Its subcellular location is the nucleus. The protein resides in the chromosome. It is found in the nucleolus. Its function is as follows. Required for proper chromosome segregation during mitosis and error-free mitotic progression. This is Coiled-coil domain-containing protein 86 from Bos taurus (Bovine).